The following is a 251-amino-acid chain: Imidazole glycerol phosphate synthase subunit HisF (251 aa).

Active-site residues include Asp11 and Asp130.

It belongs to the HisA/HisF family. Heterodimer of HisH and HisF.

The protein localises to the cytoplasm. The enzyme catalyses 5-[(5-phospho-1-deoxy-D-ribulos-1-ylimino)methylamino]-1-(5-phospho-beta-D-ribosyl)imidazole-4-carboxamide + L-glutamine = D-erythro-1-(imidazol-4-yl)glycerol 3-phosphate + 5-amino-1-(5-phospho-beta-D-ribosyl)imidazole-4-carboxamide + L-glutamate + H(+). It functions in the pathway amino-acid biosynthesis; L-histidine biosynthesis; L-histidine from 5-phospho-alpha-D-ribose 1-diphosphate: step 5/9. Functionally, IGPS catalyzes the conversion of PRFAR and glutamine to IGP, AICAR and glutamate. The HisF subunit catalyzes the cyclization activity that produces IGP and AICAR from PRFAR using the ammonia provided by the HisH subunit. In Flavobacterium psychrophilum (strain ATCC 49511 / DSM 21280 / CIP 103535 / JIP02/86), this protein is Imidazole glycerol phosphate synthase subunit HisF.